A 211-amino-acid polypeptide reads, in one-letter code: Urease accessory protein UreF (211 aa).

The disordered stretch occupies residues Asp71–Gln93.

The protein belongs to the UreF family. In terms of assembly, ureD, UreF and UreG form a complex that acts as a GTP-hydrolysis-dependent molecular chaperone, activating the urease apoprotein by helping to assemble the nickel containing metallocenter of UreC. The UreE protein probably delivers the nickel.

It localises to the cytoplasm. Functionally, required for maturation of urease via the functional incorporation of the urease nickel metallocenter. The polypeptide is Urease accessory protein UreF (Mycobacterium bovis (strain ATCC BAA-935 / AF2122/97)).